We begin with the raw amino-acid sequence, 199 residues long: Histone deacetylase complex subunit SAP25 (199 aa).

2 stretches are compositionally biased toward polar residues: residues glutamine 151–alanine 163 and glutamine 184–proline 199. The interval glutamine 151–proline 199 is disordered.

As to quaternary structure, may be a component of the mSIN3A corepressor complex. Interacts with SIN3A. Interacts with HDAC2.

It is found in the nucleus. The protein resides in the cytoplasm. Functionally, involved in the transcriptional repression mediated by the mSIN3A but not the N-CoR corepressor complex. This is Histone deacetylase complex subunit SAP25 (SAP25) from Homo sapiens (Human).